Here is a 300-residue protein sequence, read N- to C-terminus: uncharacterized protein (300 aa).

Positions 10-67 (FDLNLLVIFECIYQHLSISKAAESLYITPSAVSQSLQRLRAQFNDPLFIRSGKGIAPT) constitute an HTH lysR-type domain. The H-T-H motif DNA-binding region spans 27 to 46 (ISKAAESLYITPSAVSQSLQ).

This sequence belongs to the LysR transcriptional regulatory family.

This is an uncharacterized protein from Escherichia coli (strain K12).